A 692-amino-acid chain; its full sequence is DNA ligase (692 aa).

NAD(+) contacts are provided by residues aspartate 35–aspartate 39, serine 88–leucine 89, and glutamate 117. Lysine 119 acts as the N6-AMP-lysine intermediate in catalysis. NAD(+)-binding residues include arginine 140, glutamate 176, lysine 301, and lysine 325. Zn(2+) contacts are provided by cysteine 416, cysteine 419, cysteine 434, and cysteine 439. Residues leucine 611–threonine 692 enclose the BRCT domain.

Belongs to the NAD-dependent DNA ligase family. LigA subfamily. Requires Mg(2+) as cofactor. Mn(2+) is required as a cofactor.

The enzyme catalyses NAD(+) + (deoxyribonucleotide)n-3'-hydroxyl + 5'-phospho-(deoxyribonucleotide)m = (deoxyribonucleotide)n+m + AMP + beta-nicotinamide D-nucleotide.. DNA ligase that catalyzes the formation of phosphodiester linkages between 5'-phosphoryl and 3'-hydroxyl groups in double-stranded DNA using NAD as a coenzyme and as the energy source for the reaction. It is essential for DNA replication and repair of damaged DNA. The sequence is that of DNA ligase from Mesomycoplasma hyopneumoniae (strain J / ATCC 25934 / NCTC 10110) (Mycoplasma hyopneumoniae).